Reading from the N-terminus, the 252-residue chain is Spermatogenesis-associated protein 9 (252 aa).

A helical transmembrane segment spans residues 145–167; that stretch reads TSIMYASYAALIYLAVCVNAVLA. Positions 208–221 are enriched in basic and acidic residues; the sequence is KAKPYRSLPEKPDN. The tract at residues 208-235 is disordered; the sequence is KAKPYRSLPEKPDNLLDQPKPPANKQSN.

The protein resides in the membrane. May play at role in testicular development/spermatogenesis and may be an important factor in male infertility. This is Spermatogenesis-associated protein 9 (Spata9) from Mus musculus (Mouse).